Here is a 557-residue protein sequence, read N- to C-terminus: UvrABC system protein C (557 aa).

Positions 14–89 (EEPGVYIFKN…IKKYRPKYNV (76 aa)) constitute a GIY-YIG domain. The region spanning 194 to 229 (EEVFDYLKEKMETHSKMLDFENAAKYRDLLLNLSNV) is the UVR domain.

It belongs to the UvrC family. As to quaternary structure, interacts with UvrB in an incision complex.

Its subcellular location is the cytoplasm. Its function is as follows. The UvrABC repair system catalyzes the recognition and processing of DNA lesions. UvrC both incises the 5' and 3' sides of the lesion. The N-terminal half is responsible for the 3' incision and the C-terminal half is responsible for the 5' incision. The chain is UvrABC system protein C from Thermotoga maritima (strain ATCC 43589 / DSM 3109 / JCM 10099 / NBRC 100826 / MSB8).